We begin with the raw amino-acid sequence, 116 residues long: Beta-2-microglobulin (116 aa).

A signal peptide spans Met-1–Gly-19. Residues Pro-24–Ser-111 enclose the Ig-like C1-type domain. Residues Cys-44 and Cys-99 are joined by a disulfide bond.

Belongs to the beta-2-microglobulin family. As to quaternary structure, heterodimer of an alpha chain and a beta chain. Beta-2-microglobulin is the beta-chain of major histocompatibility complex class I molecules.

Its subcellular location is the secreted. Its function is as follows. Component of the class I major histocompatibility complex (MHC). Involved in the presentation of peptide antigens to the immune system. The protein is Beta-2-microglobulin (b2m) of Danio rerio (Zebrafish).